Reading from the N-terminus, the 420-residue chain is Glucose-1-phosphate adenylyltransferase 2 (420 aa).

Alpha-D-glucose 1-phosphate-binding positions include Tyr-109, Gly-175, 190–191 (EK), and Ser-208.

The protein belongs to the bacterial/plant glucose-1-phosphate adenylyltransferase family. As to quaternary structure, homotetramer.

The catalysed reaction is alpha-D-glucose 1-phosphate + ATP + H(+) = ADP-alpha-D-glucose + diphosphate. The protein operates within glycan biosynthesis; glycogen biosynthesis. Functionally, involved in the biosynthesis of ADP-glucose, a building block required for the elongation reactions to produce glycogen. Catalyzes the reaction between ATP and alpha-D-glucose 1-phosphate (G1P) to produce pyrophosphate and ADP-Glc. The protein is Glucose-1-phosphate adenylyltransferase 2 of Pseudoalteromonas atlantica (strain T6c / ATCC BAA-1087).